Reading from the N-terminus, the 172-residue chain is Hemagglutinin/amebocyte aggregation factor (172 aa).

Residues 1 to 19 form the signal peptide; it reads MNSPAIVIIIFSTLTFSEA. Repeat copies occupy residues 21-25, 50-54, 73-77, and 102-106. 5 disulfide bridges follow: Cys32–Cys58, Cys67–Cys172, Cys84–Cys110, Cys111–Cys117, and Cys123–Cys167. 2 repeat units span residues 129–133 and 158–162.

The protein belongs to the dermatopontin family.

The protein resides in the secreted. Possesses the property of inducing both aggregation of amebocytes and agglutination of erythrocytes. This chain is Hemagglutinin/amebocyte aggregation factor, found in Limulus polyphemus (Atlantic horseshoe crab).